Reading from the N-terminus, the 501-residue chain is Actin-binding protein WASF3 (501 aa).

Residues 57 to 93 (NEANNFYIRANSLQDRIDRLAVKVTQLDSTVEEVSLQ) are a coiled coil. A Phosphotyrosine; by ABL1 modification is found at tyrosine 151. A coiled-coil region spans residues 162–206 (KEKMLQDTEDKRKEKRRQKEQKRVDGTTREVKKVRKARNRRQEWN). The segment at 170 to 443 (EDKRKEKRRQ…PPISDARSDL (274 aa)) is disordered. Over residues 182 to 192 (QKRVDGTTREV) the composition is skewed to basic and acidic residues. Residues 219 to 237 (RLSQSVHHGASSEGSLSPD) are compositionally biased toward polar residues. Tyrosine 248 carries the post-translational modification Phosphotyrosine; by ABL1. A compositionally biased stretch (polar residues) spans 256–267 (HALQAQPATPSY). Residues 302 to 312 (QQPPPPPPPQA) show a composition bias toward pro residues. Phosphotyrosine; by ABL1 is present on tyrosine 337. Pro residues-rich tracts occupy residues 341 to 352 (SGPPPPPPPPMI) and 394 to 410 (APPPPGPPPPPPGPPGP). Residues 411–422 (SSLSSSPMHGPP) show a composition bias toward low complexity. Residues 439 to 456 (ARSDLLAAIRMGIQLKKV) form the WH2 domain. Tyrosine 485 is modified (phosphotyrosine; by ABL1).

It belongs to the SCAR/WAVE family. As to quaternary structure, binds actin and the Arp2/3 complex. Phosphorylation by ABL1 promotes lamellipodia formation and cell migration.

It is found in the cytoplasm. Its subcellular location is the cytoskeleton. Functionally, downstream effector molecules involved in the transmission of signals from tyrosine kinase receptors and small GTPases to the actin cytoskeleton. Plays a role in the regulation of cell morphology and cytoskeletal organization. Required in the control of cell shape. This is Actin-binding protein WASF3 (Wasf3) from Mus musculus (Mouse).